A 488-amino-acid chain; its full sequence is Bifunctional protein GlmU (488 aa).

A pyrophosphorylase region spans residues 1–237 (MPRTRTPLAA…AEEASGVNDR (237 aa)). Residues 13–16 (LAAG), Lys-27, Gln-82, 87–88 (GT), 110–112 (SGD), Gly-149, Glu-164, Asn-179, and Asn-235 contribute to the UDP-N-acetyl-alpha-D-glucosamine site. Asp-112 provides a ligand contact to Mg(2+). A Mg(2+)-binding site is contributed by Asn-235. A linker region spans residues 238–258 (VELSRANRVMVGRLAEAFMRA). Residues 259–488 (GVTIEDPARF…KGRPAARRAS (230 aa)) are N-acetyltransferase. UDP-N-acetyl-alpha-D-glucosamine is bound by residues Arg-341 and Lys-359. His-371 acts as the Proton acceptor in catalysis. Residues Tyr-374 and Asn-385 each coordinate UDP-N-acetyl-alpha-D-glucosamine. Residues Ala-388, 394–395 (NY), Ser-413, Ala-431, and Arg-448 each bind acetyl-CoA. Positions 459-488 (AQRQAEKQMKGTATGPASARKGRPAARRAS) are disordered. Basic residues predominate over residues 478–488 (RKGRPAARRAS).

In the N-terminal section; belongs to the N-acetylglucosamine-1-phosphate uridyltransferase family. The protein in the C-terminal section; belongs to the transferase hexapeptide repeat family. Homotrimer. Mg(2+) is required as a cofactor.

It localises to the cytoplasm. It carries out the reaction alpha-D-glucosamine 1-phosphate + acetyl-CoA = N-acetyl-alpha-D-glucosamine 1-phosphate + CoA + H(+). The enzyme catalyses N-acetyl-alpha-D-glucosamine 1-phosphate + UTP + H(+) = UDP-N-acetyl-alpha-D-glucosamine + diphosphate. It participates in nucleotide-sugar biosynthesis; UDP-N-acetyl-alpha-D-glucosamine biosynthesis; N-acetyl-alpha-D-glucosamine 1-phosphate from alpha-D-glucosamine 6-phosphate (route II): step 2/2. The protein operates within nucleotide-sugar biosynthesis; UDP-N-acetyl-alpha-D-glucosamine biosynthesis; UDP-N-acetyl-alpha-D-glucosamine from N-acetyl-alpha-D-glucosamine 1-phosphate: step 1/1. It functions in the pathway bacterial outer membrane biogenesis; LPS lipid A biosynthesis. Catalyzes the last two sequential reactions in the de novo biosynthetic pathway for UDP-N-acetylglucosamine (UDP-GlcNAc). The C-terminal domain catalyzes the transfer of acetyl group from acetyl coenzyme A to glucosamine-1-phosphate (GlcN-1-P) to produce N-acetylglucosamine-1-phosphate (GlcNAc-1-P), which is converted into UDP-GlcNAc by the transfer of uridine 5-monophosphate (from uridine 5-triphosphate), a reaction catalyzed by the N-terminal domain. This chain is Bifunctional protein GlmU, found in Anaeromyxobacter dehalogenans (strain 2CP-1 / ATCC BAA-258).